Reading from the N-terminus, the 269-residue chain is MNPKIIFLDAVREHNPLIHNITNLVSAHFTANGLLALGASPMMAESPDEMAELATISSAVVLNLGTPSDEKVSAMLAAGMAANQAGVPVVLDPVAVGASHLRQKTVATLTQNIQFAAIRGNAGELAYLADVQWASKGVDAGQGSGNLAEIAQKVAQKFNTIAVLSGEHDFVANHDRVMKLSNGVALFPKVTATGCLLSAIVGAFLAVAPRELAFQAACEACTVYAIAGELAAVGLQATQSGTFAVRLLDALAAIDATQTEQLMKAEWII.

Methionine 43 is a binding site for substrate. ATP-binding residues include arginine 119 and serine 165. Alanine 192 contributes to the substrate binding site.

Belongs to the Thz kinase family. Requires Mg(2+) as cofactor.

The enzyme catalyses 5-(2-hydroxyethyl)-4-methylthiazole + ATP = 4-methyl-5-(2-phosphooxyethyl)-thiazole + ADP + H(+). It participates in cofactor biosynthesis; thiamine diphosphate biosynthesis; 4-methyl-5-(2-phosphoethyl)-thiazole from 5-(2-hydroxyethyl)-4-methylthiazole: step 1/1. Catalyzes the phosphorylation of the hydroxyl group of 4-methyl-5-beta-hydroxyethylthiazole (THZ). The protein is Hydroxyethylthiazole kinase of Glaesserella parasuis serovar 5 (strain SH0165) (Haemophilus parasuis).